Consider the following 374-residue polypeptide: Glutamate 5-kinase (374 aa).

Lys9 provides a ligand contact to ATP. Ser49, Asp136, and Asn148 together coordinate substrate. ATP-binding positions include 168-169 (TD) and 210-216 (TGGMKSK). Positions 276-354 (SGVVRIDQGA…DEAKQLIPLV (79 aa)) constitute a PUA domain.

This sequence belongs to the glutamate 5-kinase family.

Its subcellular location is the cytoplasm. The catalysed reaction is L-glutamate + ATP = L-glutamyl 5-phosphate + ADP. It participates in amino-acid biosynthesis; L-proline biosynthesis; L-glutamate 5-semialdehyde from L-glutamate: step 1/2. Its function is as follows. Catalyzes the transfer of a phosphate group to glutamate to form L-glutamate 5-phosphate. This chain is Glutamate 5-kinase, found in Halalkalibacterium halodurans (strain ATCC BAA-125 / DSM 18197 / FERM 7344 / JCM 9153 / C-125) (Bacillus halodurans).